The sequence spans 560 residues: Formate--tetrahydrofolate ligase (560 aa).

Residue 69–76 (TPAGEGKS) coordinates ATP.

It belongs to the formate--tetrahydrofolate ligase family.

It carries out the reaction (6S)-5,6,7,8-tetrahydrofolate + formate + ATP = (6R)-10-formyltetrahydrofolate + ADP + phosphate. It participates in one-carbon metabolism; tetrahydrofolate interconversion. This chain is Formate--tetrahydrofolate ligase, found in Listeria monocytogenes serotype 4a (strain HCC23).